We begin with the raw amino-acid sequence, 82 residues long: Putative antitoxin RelB1 (82 aa).

In terms of biological role, antitoxin component of a type II toxin-antitoxin (TA) system. Its cognate toxin is RelE1 (Potential). The chain is Putative antitoxin RelB1 (relB1) from Methanocaldococcus jannaschii (strain ATCC 43067 / DSM 2661 / JAL-1 / JCM 10045 / NBRC 100440) (Methanococcus jannaschii).